The chain runs to 112 residues: Nitrogen regulatory protein GlnK2 (112 aa).

Residues Thr-29, 37-39 (GVQ), Val-64, and 87-90 (GDGK) each bind ADP. ATP contacts are provided by residues Thr-29, 37–39 (GVQ), Val-64, and 87–90 (GDGK).

Belongs to the P(II) protein family. In terms of assembly, homotrimer. Interacts and forms a complex with Amt2.

The protein resides in the cytoplasm. Its function is as follows. Involved in the regulation of nitrogen metabolism. Regulates the activity of its targets by protein-protein interaction in response to the nitrogen status of the cell. Regulates the activity of the ammonia channel Amt2 via direct interaction. The chain is Nitrogen regulatory protein GlnK2 from Methanocaldococcus jannaschii (strain ATCC 43067 / DSM 2661 / JAL-1 / JCM 10045 / NBRC 100440) (Methanococcus jannaschii).